The chain runs to 659 residues: MVAAAISTTDPRNPPRDRPQSLTNNGGQRRPRGKQVPSRYLSPSPSHSVSSTTTTTTTTTTTTSSSSSSSSSAILRTSKRYPSPSPLLSRSTTNSASNSIKTPSLLPKRSQSVDRRRPSAVSVTVGTEMSAATKMLITSTRSLSVSFQGEAFSLPISKKKETTSTPVSHRKSTPERRRSTPVRDQRENSKPVDQQRWPGASRRGNSESVVPNSLSRSLDCGSDRGKLGSGFVGRSMLHNSMIDESPRVSVNGRLSLDLGGRDEYLDIGDDIQRRPNNGLTSSVSCDFTASDTDSVSSGSTNGVQECGSGVNGEISKSKSLPRNIMASARFWQETNSRLRRLQDPGSPLSSSPGLKTSSISSKFGLSKRFSSDAVPLSSPRGMASPVRGSAIRSASPSKLWATTTSSPARALSSPSRARNGVSDQMNAYNRNNTPSILSFSADIRRGKIGEDRVMDAHLLRLLYNRDLQWRFVNARADSTVMVQRLNAEKNLWNAWVSISELRHSVTLKRIKLLLLRQKLKLASILRGQMGFLEEWSLLDRDHSSSLSGATESLKASTLRLPIVGKTVVDIQDLKHAVSSAVDVMQAMSSSIFSLTSKVDEMNSVMVETVNVTAKEKVLLERCQGCLSRVAAMQVTDCSMKTHIIQLSRIPITSSLTPQL.

Disordered stretches follow at residues 1–125 (MVAA…SVTV), 157–221 (SKKK…LDCG), 291–317 (DTDS…ISKS), 340–359 (RLQD…TSSI), and 371–429 (SDAV…NAYN). The segment covering 42 to 72 (SPSPSHSVSSTTTTTTTTTTTTSSSSSSSSS) has biased composition (low complexity). Over residues 90–102 (RSTTNSASNSIKT) the composition is skewed to polar residues. Basic and acidic residues predominate over residues 172 to 190 (STPERRRSTPVRDQRENSK). 2 stretches are compositionally biased toward polar residues: residues 206-216 (SESVVPNSLSR) and 291-303 (DTDS…TNGV). Low complexity-rich tracts occupy residues 345 to 359 (GSPL…TSSI) and 401 to 418 (ATTT…SRAR). The short motif at 468–471 (QWRF) is the QWRF motif element.

This sequence belongs to the QWRF family.

The protein is QWRF motif-containing protein 2 (QWRF2) of Arabidopsis thaliana (Mouse-ear cress).